We begin with the raw amino-acid sequence, 645 residues long: Macrolide export ATP-binding/permease protein MacB (645 aa).

In terms of domain architecture, ABC transporter spans 6–244; sequence IELKDVTRYY…EAPQYRYARK (239 aa). Residue 42–49 coordinates ATP; that stretch reads GQSGSGKS. The next 4 membrane-spanning stretches (helical) occupy residues 271 to 291, 520 to 540, 577 to 597, and 608 to 628; these read ALTLLGVVIGVSAVVAMLAIG, FSILLGSVAAISLLVGGIGVM, VVGGLGGIAGVAIGFGIVFII, and PLPAILAFSSALGTGLVFGLL.

The protein belongs to the ABC transporter superfamily. Macrolide exporter (TC 3.A.1.122) family. In terms of assembly, homodimer.

The protein resides in the cell inner membrane. Non-canonical ABC transporter that contains transmembrane domains (TMD), which form a pore in the inner membrane, and an ATP-binding domain (NBD), which is responsible for energy generation. Confers resistance against macrolides. The chain is Macrolide export ATP-binding/permease protein MacB from Hyphomonas neptunium (strain ATCC 15444).